The sequence spans 94 residues: Pyrimidine/purine nucleoside phosphorylase (94 aa).

The protein belongs to the nucleoside phosphorylase PpnP family.

It catalyses the reaction a purine D-ribonucleoside + phosphate = a purine nucleobase + alpha-D-ribose 1-phosphate. The catalysed reaction is adenosine + phosphate = alpha-D-ribose 1-phosphate + adenine. The enzyme catalyses cytidine + phosphate = cytosine + alpha-D-ribose 1-phosphate. It carries out the reaction guanosine + phosphate = alpha-D-ribose 1-phosphate + guanine. It catalyses the reaction inosine + phosphate = alpha-D-ribose 1-phosphate + hypoxanthine. The catalysed reaction is thymidine + phosphate = 2-deoxy-alpha-D-ribose 1-phosphate + thymine. The enzyme catalyses uridine + phosphate = alpha-D-ribose 1-phosphate + uracil. It carries out the reaction xanthosine + phosphate = alpha-D-ribose 1-phosphate + xanthine. Functionally, catalyzes the phosphorolysis of diverse nucleosides, yielding D-ribose 1-phosphate and the respective free bases. Can use uridine, adenosine, guanosine, cytidine, thymidine, inosine and xanthosine as substrates. Also catalyzes the reverse reactions. The polypeptide is Pyrimidine/purine nucleoside phosphorylase (Pseudomonas putida (strain GB-1)).